We begin with the raw amino-acid sequence, 338 residues long: tRNA N6-adenosine threonylcarbamoyltransferase (338 aa).

Residues H110 and H114 each contribute to the Fe cation site. Residues 132–136 (LLSGG), D165, G178, and N274 contribute to the substrate site. Fe cation is bound at residue D298.

Belongs to the KAE1 / TsaD family. It depends on Fe(2+) as a cofactor.

Its subcellular location is the cytoplasm. It carries out the reaction L-threonylcarbamoyladenylate + adenosine(37) in tRNA = N(6)-L-threonylcarbamoyladenosine(37) in tRNA + AMP + H(+). Functionally, required for the formation of a threonylcarbamoyl group on adenosine at position 37 (t(6)A37) in tRNAs that read codons beginning with adenine. Is involved in the transfer of the threonylcarbamoyl moiety of threonylcarbamoyl-AMP (TC-AMP) to the N6 group of A37, together with TsaE and TsaB. TsaD likely plays a direct catalytic role in this reaction. The protein is tRNA N6-adenosine threonylcarbamoyltransferase of Borrelia garinii subsp. bavariensis (strain ATCC BAA-2496 / DSM 23469 / PBi) (Borreliella bavariensis).